Consider the following 120-residue polypeptide: Putative defensin-like protein 179 (120 aa).

Positions 1 to 27 (MERTSTSLLFLLSLLIIFASAVNQIRA) are cleaved as a signal peptide. 7 disulfides stabilise this stretch: C37-C56, C40-C63, C44-C65, C74-C120, C85-C105, C90-C114, and C94-C116.

The protein belongs to the DEFL family.

Its subcellular location is the secreted. This is Putative defensin-like protein 179 (LCR57) from Arabidopsis thaliana (Mouse-ear cress).